The chain runs to 154 residues: Transcription antitermination protein NusB (154 aa).

The protein belongs to the NusB family.

Involved in transcription antitermination. Required for transcription of ribosomal RNA (rRNA) genes. Binds specifically to the boxA antiterminator sequence of the ribosomal RNA (rrn) operons. In Methylobacillus flagellatus (strain ATCC 51484 / DSM 6875 / VKM B-1610 / KT), this protein is Transcription antitermination protein NusB.